We begin with the raw amino-acid sequence, 186 residues long: Lipid A acyltransferase PagP (186 aa).

The first 25 residues, 1 to 25, serve as a signal peptide directing secretion; that stretch reads MNVSKYVAIFSFVFIQLISVGKVFA. Active-site residues include His58, Asp101, and Ser102.

This sequence belongs to the lipid A palmitoyltransferase family. In terms of assembly, homodimer.

Its subcellular location is the cell outer membrane. The catalysed reaction is a lipid A + a 1,2-diacyl-sn-glycero-3-phosphocholine = a hepta-acyl lipid A + a 2-acyl-sn-glycero-3-phosphocholine. It catalyses the reaction a lipid IVA + a 1,2-diacyl-sn-glycero-3-phosphocholine = a lipid IVB + a 2-acyl-sn-glycero-3-phosphocholine. The enzyme catalyses a lipid IIA + a 1,2-diacyl-sn-glycero-3-phosphocholine = a lipid IIB + a 2-acyl-sn-glycero-3-phosphocholine. Its function is as follows. Transfers a fatty acid residue from the sn-1 position of a phospholipid to the N-linked hydroxyfatty acid chain on the proximal unit of lipid A or its precursors. In Shigella boydii serotype 4 (strain Sb227), this protein is Lipid A acyltransferase PagP.